The primary structure comprises 617 residues: ATP-dependent RNA helicase DBP1 (617 aa).

Residues 1-90 form a disordered region; that stretch reads MADLPQKVSN…TSANYNRGGS (90 aa). Residues 7-17 are compositionally biased toward polar residues; the sequence is KVSNLSINNKE. Positions 38–58 are enriched in basic and acidic residues; it reads PSFERSTPKQEDKVTGGDFFR. Residues 79 to 90 show a composition bias toward polar residues; sequence GGTSANYNRGGS. The short motif at 154 to 182 is the Q motif element; that stretch reads LDFSSPPLDELLMENIKLASFTKPTPVQK. In terms of domain architecture, Helicase ATP-binding spans 185–374; it reads IPIVTKGRDL…RDFLDNYIFL (190 aa). 198 to 205 provides a ligand contact to ATP; it reads AQTGSGKT. The DEAD box signature appears at 318-321; sequence DEAD. The Helicase C-terminal domain occupies 385-545; sequence NITQRILYVD…EVPTFLSDLS (161 aa). The disordered stretch occupies residues 542–617; sequence SDLSRQNSRG…GYGNSNASWW (76 aa). The span at 580–594 shows a compositional bias: polar residues; that stretch reads FGSTRPRNTGTSNWG.

The protein belongs to the DEAD box helicase family. DDX3/DED1 subfamily.

The protein localises to the cytoplasm. It catalyses the reaction ATP + H2O = ADP + phosphate + H(+). In terms of biological role, ATP-binding RNA helicase involved in translation initiation. Remodels RNA in response to ADP and ATP concentrations by facilitating disruption, but also formation of RNA duplexes. Redundant to DED1, may be required in conditions in which DED1 expression is decreased. The sequence is that of ATP-dependent RNA helicase DBP1 (DBP1) from Saccharomyces cerevisiae (strain YJM789) (Baker's yeast).